We begin with the raw amino-acid sequence, 270 residues long: Transcription factor PU.1 (270 aa).

Residues 123–164 (SLSPAQPSSDEEEGERQSPPLEVSDGEADGLEPGPGLLPGET) are disordered. Phosphoserine occurs at positions 140 and 146. Residues 153–164 (LEPGPGLLPGET) are compositionally biased toward low complexity. Positions 170–253 (IRLYQFLLDL…VKKKLTYQFS (84 aa)) form a DNA-binding region, ETS. DNA contacts are provided by Lys217, Arg230, Arg233, and Lys243.

It belongs to the ETS family. As to quaternary structure, binds DNA as a monomer. Can form homomers. Directly interacts with CEBPD/NF-IL6-beta; this interaction does not affect DNA-binding properties of each partner. Interacts with NONO/p54(nrb). Interacts with RUNX1/AML1. Interacts with GFI1; the interaction represses SPI1 transcriptional activity, hence blocks SPI1-induced macrophage differentiation of myeloid progenitor cells. Interacts with CEBPE. Interacts with IRF4/Pip and IRF8. Interacts with JUN. Interacts with RB1. Interacts with TBP. As to expression, in the bone marrow, concentrated in hematopoietic stem cell, lymphoid progenitor, myeloid lineage (granulocyte macrophage progenitors, classical dendritic cells, monocytes) and B-cell clusters. Among B-cells, predominantly expressed in pre-B1 cells. Expressed in germinal center B-cells.

It is found in the nucleus. Its activity is regulated as follows. Transcriptional activity at macrophage-specific genes is inhibited by interaction with GFI1, which results in the inhibition of SPI1-induced macrophage differentiation of myeloid progenitor cells, but not that of the granulocyte lineage. In terms of biological role, pioneer transcription factor, which controls hematopoietic cell fate by decompacting stem cell heterochromatin and allowing other transcription factors to enter otherwise inaccessible genomic sites. Once in open chromatin, can directly control gene expression by binding genetic regulatory elements and can also more broadly influence transcription by recruiting transcription factors, such as interferon regulatory factors (IRFs), to otherwise inaccessible genomic regions. Transcriptionally activates genes important for myeloid and lymphoid lineages, such as CSF1R. Transcriptional activation from certain promoters, possibly containing low affinity binding sites, is achieved cooperatively with other transcription factors. FCER1A transactivation is achieved in cooperation with GATA1. May be particularly important for the pro- to pre-B cell transition. Binds (via the ETS domain) onto the purine-rich DNA core sequence 5'-GAGGAA-3', also known as the PU-box. In vitro can bind RNA and interfere with pre-mRNA splicing. The sequence is that of Transcription factor PU.1 (SPI1) from Homo sapiens (Human).